Consider the following 298-residue polypeptide: Foldase protein PrsA 1 (298 aa).

The first 19 residues, 1-19 (MKKWLIALAGVLLTFTLAG), serve as a signal peptide directing secretion. The N-palmitoyl cysteine moiety is linked to residue Cys-20. The S-diacylglycerol cysteine moiety is linked to residue Cys-20. Residues 136–232 (EPKVTVQHIL…NGYEIIRMIK (97 aa)) form the PpiC domain.

Belongs to the PrsA family.

It is found in the cell membrane. It catalyses the reaction [protein]-peptidylproline (omega=180) = [protein]-peptidylproline (omega=0). In terms of biological role, plays a major role in protein secretion by helping the post-translocational extracellular folding of several secreted proteins. This Lactiplantibacillus plantarum (strain ATCC BAA-793 / NCIMB 8826 / WCFS1) (Lactobacillus plantarum) protein is Foldase protein PrsA 1 (prsA1).